Reading from the N-terminus, the 334-residue chain is L-lactate dehydrogenase A chain (334 aa).

NAD(+) is bound by residues 30 to 58 (GQVG…LEDK) and R100. Residues R107, N139, and R170 each contribute to the substrate site. N139 serves as a coordination point for NAD(+). H194 serves as the catalytic Proton acceptor. T249 is a binding site for substrate.

It belongs to the LDH/MDH superfamily. LDH family. In terms of assembly, homotetramer.

It localises to the cytoplasm. The enzyme catalyses (S)-lactate + NAD(+) = pyruvate + NADH + H(+). The protein operates within fermentation; pyruvate fermentation to lactate; (S)-lactate from pyruvate: step 1/1. In terms of biological role, interconverts simultaneously and stereospecifically pyruvate and lactate with concomitant interconversion of NADH and NAD(+). In Xenopus laevis (African clawed frog), this protein is L-lactate dehydrogenase A chain (ldha).